We begin with the raw amino-acid sequence, 266 residues long: Methionine aminopeptidase (266 aa).

A substrate-binding site is contributed by His80. Positions 98, 109, and 172 each coordinate a divalent metal cation. A substrate-binding site is contributed by His179. A divalent metal cation-binding residues include Glu206 and Glu237.

Belongs to the peptidase M24A family. Methionine aminopeptidase type 1 subfamily. Monomer. It depends on Co(2+) as a cofactor. Zn(2+) serves as cofactor. Mn(2+) is required as a cofactor. The cofactor is Fe(2+).

The catalysed reaction is Release of N-terminal amino acids, preferentially methionine, from peptides and arylamides.. In terms of biological role, removes the N-terminal methionine from nascent proteins. The N-terminal methionine is often cleaved when the second residue in the primary sequence is small and uncharged (Met-Ala-, Cys, Gly, Pro, Ser, Thr, or Val). Requires deformylation of the N(alpha)-formylated initiator methionine before it can be hydrolyzed. This is Methionine aminopeptidase from Buchnera aphidicola subsp. Baizongia pistaciae (strain Bp).